A 361-amino-acid polypeptide reads, in one-letter code: Methionine import ATP-binding protein MetN (361 aa).

The region spanning 22 to 257 (VRLIDVKRRF…PQTDITRSLL (236 aa)) is the ABC transporter domain. Position 54–61 (54–61 (GRSGAGKS)) interacts with ATP.

The protein belongs to the ABC transporter superfamily. Methionine importer (TC 3.A.1.24) family. As to quaternary structure, the complex is composed of two ATP-binding proteins (MetN), two transmembrane proteins (MetI) and a solute-binding protein (MetQ).

Its subcellular location is the cell inner membrane. The catalysed reaction is L-methionine(out) + ATP + H2O = L-methionine(in) + ADP + phosphate + H(+). It catalyses the reaction D-methionine(out) + ATP + H2O = D-methionine(in) + ADP + phosphate + H(+). Part of the ABC transporter complex MetNIQ involved in methionine import. Responsible for energy coupling to the transport system. The chain is Methionine import ATP-binding protein MetN from Rhizobium etli (strain ATCC 51251 / DSM 11541 / JCM 21823 / NBRC 15573 / CFN 42).